The following is a 348-amino-acid chain: MVSNIPFSIPEHSLDRDCTTLSRHVLQQLQSFSSDAQDLSAIMSRIALAGKLIARRLSKAGLMADVLGFTGETNVQGESVKKMDVFANEVFISVFKQSGLVCRLASEEMDKPYYIPENCPIGRYTLLYDPIDGSSNVDINLNVGSIFAIRQQEDNDLDGEARDLLQNGRKQIAAGYILYGPSTILVYSIGRGVHAFVLDPSLGEFILAQENIIIPDHGPIYSTNEGNFWQWDEAIRDYTRYVHRHDGYTARYSGALVGDIHRILMQGGVFLYPGTVKNPQGKLRLIYETAPLAFLIEQAGGKASDGVTNLLDIVPDKLHYRTPLVIGSVEDVKLVESFIADRRHRDRV.

Mg(2+) is bound by residues glutamate 107, aspartate 129, isoleucine 131, and aspartate 132. Residues aspartate 132 to serine 135, asparagine 224, tyrosine 252, and lysine 282 contribute to the substrate site. Glutamate 288 is a Mg(2+) binding site.

It belongs to the FBPase class 1 family. As to quaternary structure, homotetramer. Mg(2+) is required as a cofactor.

The protein localises to the cytoplasm. It catalyses the reaction beta-D-fructose 1,6-bisphosphate + H2O = beta-D-fructose 6-phosphate + phosphate. Its pathway is carbohydrate biosynthesis; Calvin cycle. This Microcystis aeruginosa (strain NIES-843 / IAM M-2473) protein is Fructose-1,6-bisphosphatase class 1.